The chain runs to 229 residues: Large ribosomal subunit protein uL1 (229 aa).

In terms of assembly, part of the 50S ribosomal subunit.

Directly binds to 23S rRNA. Forms what is known as the L1 stalk, which protrudes beyond the 70S ribosome surface. The stalk is preferentially stabilized in 70S versus 50S crystals. Interacts with the E site tRNA, blocking the exit path. This blockage implies that this section of the ribosome must be able to move to release the deacetylated tRNA. Its function is as follows. Protein L1 is also a translational repressor protein, it controls the translation of the L11 operon by binding to its mRNA. This Thermus thermophilus (strain ATCC 27634 / DSM 579 / HB8) protein is Large ribosomal subunit protein uL1 (rplA).